Here is an 87-residue protein sequence, read N- to C-terminus: Small ribosomal subunit protein bS20 (87 aa).

Residues 1–22 (MANSAQARKRARQAVKQRAHNA) form a disordered region. Positions 7–19 (ARKRARQAVKQRA) are enriched in basic residues.

The protein belongs to the bacterial ribosomal protein bS20 family.

Its function is as follows. Binds directly to 16S ribosomal RNA. The sequence is that of Small ribosomal subunit protein bS20 from Methylobacillus flagellatus (strain ATCC 51484 / DSM 6875 / VKM B-1610 / KT).